We begin with the raw amino-acid sequence, 870 residues long: NEDD4-like E3 ubiquitin-protein ligase WWP2 (870 aa).

Residues methionine 1 to threonine 117 form the C2 domain. The segment at serine 150–aspartate 300 is disordered. Residues proline 152–threonine 171 are compositionally biased toward polar residues. The segment covering glycine 198–serine 208 has biased composition (low complexity). Serine 211 is subject to Phosphoserine. Composition is skewed to polar residues over residues valine 222–valine 235 and serine 262–threonine 289. Residues glutamine 290 to aspartate 300 show a composition bias toward low complexity. WW domains are found at residues aspartate 300 to proline 333, arginine 330 to alanine 363, glycine 405 to threonine 437, and proline 444 to proline 477. Residues lysine 536–glutamate 870 enclose the HECT domain. The active-site Glycyl thioester intermediate is the cysteine 838.

In terms of assembly, interacts with SCNN1A, SCNN1B, SCNN1G, WBP1, WBP2 and ATN1. Interacts with ERBB4, NDFIP1 and NDFIP2. Interacts with ARRDC4. Interacts with POU5F1, RBP1, EGR2 and SLC11A2. Interacts (via WW domains) with ARRDC1 (via PPxY motifs); ubiquitinates ARRDC1. Interacts (via WW domains) with ARRDC2 and ARRDC3. Autoubiquitinated. Ubiquitinated by the SCF(FBXL15) complex, leading to its degradation by the proteasome.

Its subcellular location is the nucleus. The enzyme catalyses S-ubiquitinyl-[E2 ubiquitin-conjugating enzyme]-L-cysteine + [acceptor protein]-L-lysine = [E2 ubiquitin-conjugating enzyme]-L-cysteine + N(6)-ubiquitinyl-[acceptor protein]-L-lysine.. It functions in the pathway protein modification; protein ubiquitination. Its activity is regulated as follows. Activated by NDFIP1- and NDFIP2-binding. In terms of biological role, E3 ubiquitin-protein ligase which accepts ubiquitin from an E2 ubiquitin-conjugating enzyme in the form of a thioester and then directly transfers the ubiquitin to targeted substrates. Polyubiquitinates POU5F1 by 'Lys-63'-linked conjugation and promotes it to proteasomal degradation; regulates POU5F1 protein level during differentiation of embryonal carcinoma cells (ECCs) but not in undifferentiated ECCs and embryonic stem cells (ESCs). Ubiquitinates EGR2 and promotes it to proteasomal degradation; in T-cells the ubiquitination inhibits activation-induced cell death. Ubiquitinates SLC11A2; the ubiquitination is enhanced by presence of NDFIP1 and NDFIP2. Ubiquitinates RPB1 and promotes it to proteasomal degradation. This Mus musculus (Mouse) protein is NEDD4-like E3 ubiquitin-protein ligase WWP2 (Wwp2).